The primary structure comprises 330 residues: Methionyl-tRNA formyltransferase (330 aa).

112–115 (SLLP) serves as a coordination point for (6S)-5,6,7,8-tetrahydrofolate.

It belongs to the Fmt family.

It catalyses the reaction L-methionyl-tRNA(fMet) + (6R)-10-formyltetrahydrofolate = N-formyl-L-methionyl-tRNA(fMet) + (6S)-5,6,7,8-tetrahydrofolate + H(+). In terms of biological role, attaches a formyl group to the free amino group of methionyl-tRNA(fMet). The formyl group appears to play a dual role in the initiator identity of N-formylmethionyl-tRNA by promoting its recognition by IF2 and preventing the misappropriation of this tRNA by the elongation apparatus. This is Methionyl-tRNA formyltransferase from Alcanivorax borkumensis (strain ATCC 700651 / DSM 11573 / NCIMB 13689 / SK2).